Consider the following 148-residue polypeptide: Mediator of RNA polymerase II transcription subunit 31 (148 aa).

This sequence belongs to the Mediator complex subunit 31 family. Component of the Mediator complex.

The protein localises to the nucleus. In terms of biological role, component of the Mediator complex, a coactivator involved in the regulated transcription of nearly all RNA polymerase II-dependent genes. Mediator functions as a bridge to convey information from gene-specific regulatory proteins to the basal RNA polymerase II transcription machinery. Mediator is recruited to promoters by direct interactions with regulatory proteins and serves as a scaffold for the assembly of a functional preinitiation complex with RNA polymerase II and the general transcription factors. This chain is Mediator of RNA polymerase II transcription subunit 31, found in Taenia solium (Pork tapeworm).